The chain runs to 341 residues: Short chain dehydrogenase FGM9 (341 aa).

NADP(+) is bound by residues Leu38, Lys63, Asp88, and Asn114. Catalysis depends on proton donor residues Ser167 and Tyr200. Tyr200 and Lys204 together coordinate NADP(+). Lys204 (lowers pKa of active site Tyr) is an active-site residue.

This sequence belongs to the short-chain dehydrogenases/reductases (SDR) family.

Its pathway is secondary metabolite biosynthesis. Its function is as follows. Short chain dehydrogenase; part of the Fg3_54/C64 gene cluster that mediates the biosynthesis of the octapeptide fusaoctaxin A, a virulence factor that is required for cell-to-cell invasiveness of plant host. The 2 nonribosomal peptide synthetases NRPS9 and NRPS5 form an assembly line which likely utilizes GABA as a starter unit (loaded on the unique module M1 of NRPS9) and sequentially incorporates seven extender units composed of the residues L-Ala, L-allo-Ile, L-Ser, L-Val, L-Ser, L-Leu and L-Leu, respectively. During the process, each of the residues that are tethered on modules M3-M7 of NRPS5 containing an E domain can undergo an epimerization reaction to produce a D-configuration before the transpeptidation reaction occurs. The elongation of the peptidyl chain might be terminated by module M8-mediated L-Leu incorporation, followed by R domain-catalyzed 4 electron reduction to release the resulting octapeptide from the assembly line as an alcohol. Fusaoctaxin A is cleaved by the cluster specific ABC transporter FGM5 to the pentapeptide fusapentaxin A and the tripeptide fusatrixin A. The other enzymes from the cluster, FGM1, FGM2, FGM3 and FGM9 seem not to be involved in the biosynthesis of fusaoctaxin A and their functions have still to be determined. This is Short chain dehydrogenase FGM9 from Gibberella zeae (strain ATCC MYA-4620 / CBS 123657 / FGSC 9075 / NRRL 31084 / PH-1) (Wheat head blight fungus).